Consider the following 432-residue polypeptide: MKKHNVFLLSLGCSKNTVDSERLMAQAEASGITFTEEADLADTILINTCGFIEDAKEESIAEILAAVEKKTQGIVSGVYVMGCLSELYRTEMREELPEIDGFFGTRELPALLQAIGAQYRDELYDHRSLLTPPHISYLKIAEGCNRSCSFCSIPKIRGRYRSQPMEQLLREAALLQKKGVRELNLIAQDTSIYGRDLYGTPMLRELLVRLSDMEFRWIRLLYAYPLDFPLEVITAMSERKNICNYLDLPLQHCNDRILRSMNRGITKTETVRLLDTIRAANPDIRLRTTMLVGFPGETRAEFDELMQFIETMRFDRLGCFPYCHEEHAPSYALEDTVKAEEKEERRAELMELQETIAKENNQLFEGKELTVLIDQIEGDIAIARTEYDAPEVDNECYLTTGSLRVGTGEFCTAHISESSAYELHGTITAVNG.

In terms of domain architecture, MTTase N-terminal spans 4–120; that stretch reads HNVFLLSLGC…LLQAIGAQYR (117 aa). [4Fe-4S] cluster contacts are provided by Cys-13, Cys-49, Cys-83, Cys-144, Cys-148, and Cys-151. A Radical SAM core domain is found at 130-359; it reads LTPPHISYLK…MELQETIAKE (230 aa). A TRAM domain is found at 362–429; that stretch reads QLFEGKELTV…AYELHGTITA (68 aa).

This sequence belongs to the methylthiotransferase family. RimO subfamily. It depends on [4Fe-4S] cluster as a cofactor.

Its subcellular location is the cytoplasm. The enzyme catalyses L-aspartate(89)-[ribosomal protein uS12]-hydrogen + (sulfur carrier)-SH + AH2 + 2 S-adenosyl-L-methionine = 3-methylsulfanyl-L-aspartate(89)-[ribosomal protein uS12]-hydrogen + (sulfur carrier)-H + 5'-deoxyadenosine + L-methionine + A + S-adenosyl-L-homocysteine + 2 H(+). Its function is as follows. Catalyzes the methylthiolation of an aspartic acid residue of ribosomal protein uS12. The chain is Ribosomal protein uS12 methylthiotransferase RimO from Chlorobium phaeobacteroides (strain DSM 266 / SMG 266 / 2430).